Here is a 425-residue protein sequence, read N- to C-terminus: GTPase Obg (425 aa).

The 158-residue stretch at 1–158 (MFVDVARIYV…RWLLLELKVV (158 aa)) folds into the Obg domain. The region spanning 159–330 (ADVGLVGFPN…LLEAAYDLIR (172 aa)) is the OBG-type G domain. GTP contacts are provided by residues 165–172 (GFPNAGKS), 190–194 (FTTLT), 212–215 (DIPG), 282–285 (NKMD), and 311–313 (SGA). Mg(2+) is bound by residues Ser172 and Thr192. Positions 345–422 (VYRPKEEGWR…VCDIEFELMA (78 aa)) constitute an OCT domain.

Belongs to the TRAFAC class OBG-HflX-like GTPase superfamily. OBG GTPase family. As to quaternary structure, monomer. Requires Mg(2+) as cofactor.

It is found in the cytoplasm. Its function is as follows. An essential GTPase which binds GTP, GDP and possibly (p)ppGpp with moderate affinity, with high nucleotide exchange rates and a fairly low GTP hydrolysis rate. Plays a role in control of the cell cycle, stress response, ribosome biogenesis and in those bacteria that undergo differentiation, in morphogenesis control. The protein is GTPase Obg of Symbiobacterium thermophilum (strain DSM 24528 / JCM 14929 / IAM 14863 / T).